Consider the following 235-residue polypeptide: Serine protease SplA (235 aa).

Residues 1 to 35 form the signal peptide; it reads MNKNVMVKGLTALTILTSLGFAENISNQPHSIAKA. Residues His-74, Asp-113, and Ser-189 each act as charge relay system in the active site.

The protein belongs to the peptidase S1B family.

The protein localises to the secreted. The polypeptide is Serine protease SplA (splA) (Staphylococcus aureus (strain USA300)).